Here is a 172-residue protein sequence, read N- to C-terminus: Inorganic pyrophosphatase (172 aa).

Substrate contacts are provided by Lys29, Arg43, and Tyr55. Asp65, Asp70, and Asp102 together coordinate Mg(2+). Tyr141 contributes to the substrate binding site.

Belongs to the PPase family. In terms of assembly, homohexamer. It depends on Mg(2+) as a cofactor.

It localises to the cytoplasm. It catalyses the reaction diphosphate + H2O = 2 phosphate + H(+). Catalyzes the hydrolysis of inorganic pyrophosphate (PPi) forming two phosphate ions. In Rickettsia prowazekii (strain Madrid E), this protein is Inorganic pyrophosphatase.